We begin with the raw amino-acid sequence, 501 residues long: Trans-cinnamate 4-monooxygenase (501 aa).

A helical transmembrane segment spans residues Leu-3 to Val-23. (E)-cinnamate contacts are provided by residues Arg-213–Gln-218 and Ala-302. Cys-443 is a binding site for heme.

The protein belongs to the cytochrome P450 family. Heme serves as cofactor.

It is found in the membrane. The enzyme catalyses (E)-cinnamate + reduced [NADPH--hemoprotein reductase] + O2 = (E)-4-coumarate + oxidized [NADPH--hemoprotein reductase] + H2O + H(+). It functions in the pathway phenylpropanoid metabolism; trans-4-coumarate biosynthesis; trans-4-coumarate from trans-cinnamate: step 1/1. Its function is as follows. Catalyzes the first oxidative step of the phenylpropanoid pathway in higher plants by transforming trans-cinnamate into p-coumarate. The compounds formed by this pathway are essential components for lignification, pollination, and defense against ultraviolet light, predators and pathogens. Can also use 2-naphthoic acid as substrate. This chain is Trans-cinnamate 4-monooxygenase, found in Sorghum bicolor (Sorghum).